The chain runs to 143 residues: Hemoglobin subunit alpha-1 (143 aa).

N-acetylserine is present on S2. Residues S2 to R143 form the Globin domain. H60 contacts O2. Residue H89 participates in heme b binding.

The protein belongs to the globin family. In terms of assembly, hb1 is a heterotetramer of two alpha-1 chains and two beta-1 chains. In terms of tissue distribution, red blood cells.

In terms of biological role, involved in oxygen transport from gills to the various peripheral tissues. In Liparis tunicatus (Kelp snailfish), this protein is Hemoglobin subunit alpha-1.